The chain runs to 125 residues: Holo-[acyl-carrier-protein] synthase (125 aa).

Mg(2+)-binding residues include aspartate 8 and glutamate 57.

This sequence belongs to the P-Pant transferase superfamily. AcpS family. Mg(2+) serves as cofactor.

The protein localises to the cytoplasm. It catalyses the reaction apo-[ACP] + CoA = holo-[ACP] + adenosine 3',5'-bisphosphate + H(+). Functionally, transfers the 4'-phosphopantetheine moiety from coenzyme A to a Ser of acyl-carrier-protein. In Dechloromonas aromatica (strain RCB), this protein is Holo-[acyl-carrier-protein] synthase.